Reading from the N-terminus, the 337-residue chain is Phosphate acyltransferase (337 aa).

Belongs to the PlsX family. As to quaternary structure, homodimer. Probably interacts with PlsY.

The protein resides in the cytoplasm. It catalyses the reaction a fatty acyl-[ACP] + phosphate = an acyl phosphate + holo-[ACP]. Its pathway is lipid metabolism; phospholipid metabolism. Its function is as follows. Catalyzes the reversible formation of acyl-phosphate (acyl-PO(4)) from acyl-[acyl-carrier-protein] (acyl-ACP). This enzyme utilizes acyl-ACP as fatty acyl donor, but not acyl-CoA. The sequence is that of Phosphate acyltransferase from Listeria monocytogenes serotype 4b (strain F2365).